The following is an 82-amino-acid chain: EMBRYO SURROUNDING FACTOR 1-like protein 10 (82 aa).

An N-terminal signal peptide occupies residues 1-22 (MSSLYFAILCLFMIFLVPLHEF). Intrachain disulfides connect cysteine 39–cysteine 55, cysteine 44–cysteine 74, cysteine 53–cysteine 70, and cysteine 56–cysteine 63.

The protein belongs to the MEG family. In terms of tissue distribution, expressed in stems, leaves and flowers.

This Arabidopsis thaliana (Mouse-ear cress) protein is EMBRYO SURROUNDING FACTOR 1-like protein 10 (ESFL10).